A 336-amino-acid polypeptide reads, in one-letter code: UDP-N-acetylenolpyruvoylglucosamine reductase (336 aa).

The FAD-binding PCMH-type domain maps to 17-188 (GFDVRARYAS…TAVTLRLSRD (172 aa)). Residue arginine 164 is part of the active site. The active-site Proton donor is serine 236. Residue glutamate 332 is part of the active site.

The protein belongs to the MurB family. Requires FAD as cofactor.

It is found in the cytoplasm. The catalysed reaction is UDP-N-acetyl-alpha-D-muramate + NADP(+) = UDP-N-acetyl-3-O-(1-carboxyvinyl)-alpha-D-glucosamine + NADPH + H(+). It participates in cell wall biogenesis; peptidoglycan biosynthesis. Cell wall formation. This chain is UDP-N-acetylenolpyruvoylglucosamine reductase, found in Cupriavidus pinatubonensis (strain JMP 134 / LMG 1197) (Cupriavidus necator (strain JMP 134)).